The chain runs to 145 residues: MILLKREVSTVNYKMLRRTPLMTIMDWEVTTLKVQNRSLKIHLLMVIKIQIDSVLREMIFHLIYEAQKQRAEDKKYKNKNKIKRKVIITITEICTFTIKYIRYIEVIILSHHFVIGFSFLLGLLRLGTYLMSSRPMQHMYINNFT.

A helical membrane pass occupies residues 104 to 124; sequence IEVIILSHHFVIGFSFLLGLL.

It is found in the membrane. This is an uncharacterized protein from Saccharomyces cerevisiae (strain ATCC 204508 / S288c) (Baker's yeast).